A 283-amino-acid chain; its full sequence is Bifunctional protein FolD (283 aa).

Residues Gly-165 to Ser-167, Ser-190, and Ile-231 contribute to the NADP(+) site.

The protein belongs to the tetrahydrofolate dehydrogenase/cyclohydrolase family. In terms of assembly, homodimer.

The catalysed reaction is (6R)-5,10-methylene-5,6,7,8-tetrahydrofolate + NADP(+) = (6R)-5,10-methenyltetrahydrofolate + NADPH. The enzyme catalyses (6R)-5,10-methenyltetrahydrofolate + H2O = (6R)-10-formyltetrahydrofolate + H(+). It participates in one-carbon metabolism; tetrahydrofolate interconversion. Its function is as follows. Catalyzes the oxidation of 5,10-methylenetetrahydrofolate to 5,10-methenyltetrahydrofolate and then the hydrolysis of 5,10-methenyltetrahydrofolate to 10-formyltetrahydrofolate. This Bordetella bronchiseptica (strain ATCC BAA-588 / NCTC 13252 / RB50) (Alcaligenes bronchisepticus) protein is Bifunctional protein FolD.